A 999-amino-acid chain; its full sequence is Sarcoplasmic/endoplasmic reticulum calcium ATPase 3 (999 aa).

At Met-1 the chain carries N-acetylmethionine. Topologically, residues 1–48 (MEEAHLLSAADVLRRFSVTAEGGLTLEQVTDARERYGPNELPTEEGKS) are cytoplasmic. Ser-17 is modified (phosphoserine). Thr-19 is subject to Phosphothreonine. Residues 49 to 69 (LWELVVEQFEDLLVRILLLAA) traverse the membrane as a helical segment. Residues 70–89 (LVSFVLAWFEEGEETTTAFV) are Lumenal-facing. Residues 90–110 (EPLVIMLILVANAIVGVWQER) traverse the membrane as a helical segment. Residues 111 to 253 (NAESAIEALK…PERTPLQRKL (143 aa)) lie on the Cytoplasmic side of the membrane. A helical membrane pass occupies residues 254 to 273 (DEFGRQLSHAISVICVAVWV). Residues 274–295 (INIGHFADPAHGGSWLRGAVYY) are Lumenal-facing. The chain crosses the membrane as a helical span at residues 296–313 (FKIAVALAVAAIPEGLPA). Ca(2+) is bound by residues Val-304, Ala-305, Ile-307, and Glu-309. Residues 314–757 (VITTCLALGT…EEGRAIYNNM (444 aa)) lie on the Cytoplasmic side of the membrane. The active-site 4-aspartylphosphate intermediate is Asp-351. Mg(2+)-binding residues include Asp-351 and Thr-353. Thr-353 contacts ATP. The interval 370 to 400 (AEAEAGACRLHEFTISGTTYTPEGEVRQGEQ) is interaction with phospholamban 1. A Phosphothreonine modification is found at Thr-415. Residues Glu-442, Arg-489, Lys-515, Arg-560, Thr-625, Gly-626, and Asp-627 each coordinate ATP. Ser-662 is modified (phosphoserine). Arg-678 and Lys-684 together coordinate ATP. Residue Asp-703 participates in Mg(2+) binding. Residue Asn-706 participates in ATP binding. The chain crosses the membrane as a helical span at residues 758-777 (KQFIRYLISSNVGEVVCIFL). The Ca(2+) site is built by Asn-768 and Glu-771. Residues 778 to 787 (TAILGLPEAL) are Lumenal-facing. A helical membrane pass occupies residues 788-808 (IPVQLLWVNLVTDGLPATALG). Residues 788–808 (IPVQLLWVNLVTDGLPATALG) are interaction with phospholamban 2. Residues Asn-796, Thr-799, and Asp-800 each contribute to the Ca(2+) site. The Cytoplasmic portion of the chain corresponds to 809-828 (FNPPDLDIMEKLPRNPREAL). The helical transmembrane segment at 829–851 (ISGWLFFRYLAIGVYVGLATVAA) threads the bilayer. Over 852–897 (ATWWFLYDAEGPQVTFHQLRNFLKCSEDNPLFAGIDCEVFESRFPT) the chain is Lumenal. Residues 898 to 917 (TMALSVLVTIEMCNALNSVS) form a helical membrane-spanning segment. A Ca(2+)-binding site is contributed by Glu-908. The Cytoplasmic segment spans residues 918–930 (ENQSLLRMPPWLN). The chain crosses the membrane as a helical span at residues 931-949 (PWLLGAVVMSMALHFLILL). At 950-964 (VPPLPLIFQVTPLSG) the chain is on the lumenal side. A helical membrane pass occupies residues 965–985 (RQWGVVLQMSLPVILLDEALK). Topologically, residues 986-999 (YLSRHHVDEKKDLK) are cytoplasmic.

The protein belongs to the cation transport ATPase (P-type) (TC 3.A.3) family. Type IIA subfamily. Interacts with sarcolipin (SLN). Interacts with phospholamban (PLN). Interacts with myoregulin (MRLN). Interacts with DWORF. Interacts with VMP1. Interacts with TUNAR; the interaction occurs at low levels in low glucose conditions and is increased by high glucose levels. Mg(2+) serves as cofactor. In terms of tissue distribution, found in most tissues. Most abundant in large and small intestine, spleen and lung. Also detected in PC12 cells.

It localises to the endoplasmic reticulum membrane. The protein resides in the sarcoplasmic reticulum membrane. It catalyses the reaction Ca(2+)(in) + ATP + H2O = Ca(2+)(out) + ADP + phosphate + H(+). Its activity is regulated as follows. Inhibited by sarcolipin (SLN), phospholamban (PLN) and myoregulin (MRLN). Enhanced by DWORF; DWORF increases activity by displacing sarcolipin (SLN), phospholamban (PLN) and myoregulin (MRLN). Its function is as follows. This magnesium-dependent enzyme catalyzes the hydrolysis of ATP coupled with the transport of the calcium. Transports calcium ions from the cytosol into the sarcoplasmic/endoplasmic reticulum lumen. Contributes to calcium sequestration involved in muscular excitation/contraction. Functionally, this magnesium-dependent enzyme catalyzes the hydrolysis of ATP coupled with the transport of calcium. Transports calcium ions from the cytosol into the sarcoplasmic/endoplasmic reticulum lumen. Contributes to calcium sequestration involved in muscular excitation/contraction. The sequence is that of Sarcoplasmic/endoplasmic reticulum calcium ATPase 3 (Atp2a3) from Rattus norvegicus (Rat).